The following is a 525-amino-acid chain: Peptide chain release factor 3 (525 aa).

Positions 8–276 (AMRRTFAIIS…AFVKEAPPPQ (269 aa)) constitute a tr-type G domain. GTP contacts are provided by residues 17–24 (SHPDAGKT), 85–89 (DTPGH), and 139–142 (NKMD).

Belongs to the TRAFAC class translation factor GTPase superfamily. Classic translation factor GTPase family. PrfC subfamily.

It localises to the cytoplasm. Increases the formation of ribosomal termination complexes and stimulates activities of RF-1 and RF-2. It binds guanine nucleotides and has strong preference for UGA stop codons. It may interact directly with the ribosome. The stimulation of RF-1 and RF-2 is significantly reduced by GTP and GDP, but not by GMP. This Coxiella burnetii (strain RSA 331 / Henzerling II) protein is Peptide chain release factor 3.